Reading from the N-terminus, the 434-residue chain is D-amino acid dehydrogenase (434 aa).

3 to 17 (VLVLGSGVIGTASAY) contacts FAD.

This sequence belongs to the DadA oxidoreductase family. It depends on FAD as a cofactor.

It catalyses the reaction a D-alpha-amino acid + A + H2O = a 2-oxocarboxylate + AH2 + NH4(+). It functions in the pathway amino-acid degradation; D-alanine degradation; NH(3) and pyruvate from D-alanine: step 1/1. Oxidative deamination of D-amino acids. The chain is D-amino acid dehydrogenase from Pseudomonas putida (strain GB-1).